The primary structure comprises 809 residues: Putative zinc metalloprotease TRE2 (809 aa).

2 stretches are compositionally biased toward polar residues: residues 1–12 and 20–30; these read MRSSYQPVSTTN and PTASSSHNLLM. The interval 1–66 is disordered; the sequence is MRSSYQPVST…PSYEFDIEDP (66 aa). Over 1–125 the chain is Cytoplasmic; the sequence is MRSSYQPVST…KIGNPFILRR (125 aa). The segment covering 37-50 has biased composition (low complexity); the sequence is SPPSSNDNSIETNI. A helical; Signal-anchor for type II membrane protein membrane pass occupies residues 126-146; that stretch reads FFYIIFMSFIAYYVLSSGYLF. Over 147–809 the chain is Extracellular; it reads NEKASGSKGM…VEETNDIGYK (663 aa). A glycan (N-linked (GlcNAc...) asparagine) is linked at Asn228. The PA domain occupies 255–349; that stretch reads SNGKLSKVSL…STGDASGLNW (95 aa). N-linked (GlcNAc...) asparagine glycans are attached at residues Asn669 and Asn736.

This sequence belongs to the peptidase M28 family. M28B subfamily.

It is found in the membrane. The polypeptide is Putative zinc metalloprotease TRE2 (TRE2) (Saccharomyces cerevisiae (strain ATCC 204508 / S288c) (Baker's yeast)).